The sequence spans 256 residues: MALAKRIIPCLDVDNGRVVKGVRFENIRDAGDPVEIAQRYDEQGADEITFLDITASHEGRDTTLHTVERMASQVFIPLTVGGGVRTVQDIRNLLNAGADKVSINTAAVFNPEFVGEAAGRFGSQCIVVAIDAKKVSGPGEAPRWEIFTHGGRKPTGLDAVAWAKKMEDYGAGEILLTSMDQDGMKSGFDLGVTRAISEAVGIPVIASGGVGNLEHLAAGILEGKADAVLAASIFHFGEYTVPEAKAYLAGRGIVVR.

Residues Asp-12 and Asp-131 contribute to the active site.

It belongs to the HisA/HisF family. Heterodimer of HisH and HisF.

Its subcellular location is the cytoplasm. It carries out the reaction 5-[(5-phospho-1-deoxy-D-ribulos-1-ylimino)methylamino]-1-(5-phospho-beta-D-ribosyl)imidazole-4-carboxamide + L-glutamine = D-erythro-1-(imidazol-4-yl)glycerol 3-phosphate + 5-amino-1-(5-phospho-beta-D-ribosyl)imidazole-4-carboxamide + L-glutamate + H(+). Its pathway is amino-acid biosynthesis; L-histidine biosynthesis; L-histidine from 5-phospho-alpha-D-ribose 1-diphosphate: step 5/9. Its function is as follows. IGPS catalyzes the conversion of PRFAR and glutamine to IGP, AICAR and glutamate. The HisF subunit catalyzes the cyclization activity that produces IGP and AICAR from PRFAR using the ammonia provided by the HisH subunit. The sequence is that of Imidazole glycerol phosphate synthase subunit HisF from Azotobacter vinelandii (strain DJ / ATCC BAA-1303).